Consider the following 1159-residue polypeptide: WASH complex subunit 5 (1159 aa).

It belongs to the strumpellin family. As to quaternary structure, component of the WASH complex.

The protein resides in the early endosome. In terms of biological role, acts at least in part as component of the WASH complex which seems to regulate washc1 nucleation-promoting factor (NPF) activity and is required for its membrane targeting during endosomal sorting. In Danio rerio (Zebrafish), this protein is WASH complex subunit 5.